We begin with the raw amino-acid sequence, 1218 residues long: NACHT, LRR and PYD domains-containing protein 1a allele 1 (1218 aa).

The disordered stretch occupies residues 1-61 (MEESQSKQES…SLPGWSSTSN (61 aa)). Polar residues predominate over residues 7–29 (KQESNTRVAQHGSQQDVDPTFQT). The NACHT domain occupies 175 to 484 (QLVIIEGAAG…EFFAAMSYIL (310 aa)). An ATP-binding site is contributed by 181–188 (GAAGIGKS). 3 LRR repeats span residues 343 to 364 (KERN…LTLC), 673 to 693 (NLEE…RSLC), and 730 to 750 (RLAE…RQLC). The span at 799-815 (TMPTENTDGEESLTSSK) shows a compositional bias: polar residues. The tract at residues 799–842 (TMPTENTDGEESLTSSKQQQQQSGDKHMEPLGTDDDFWGPSGPV) is disordered. The segment at 835–968 (FWGPSGPVST…HFAVLENPSF (134 aa)) is ZU5. In terms of domain architecture, FIIND spans 835-1118 (FWGPSGPVST…LRPALPRMAS (284 aa)). The UPA stretch occupies residues 969-1118 (SPMGVLLRMI…LRPALPRMAS (150 aa)). The CARD domain maps to 1122 to 1211 (DAPALLHFVD…HLIMDLLEKS (90 aa)).

Belongs to the NLRP family. Interacts (via LRR repeats) with BCL2 and BCL2L1 (via the loop between motifs BH4 and BH3). Interacts with NOD2; this interaction is enhanced in the presence of muramyl dipeptide (MDP) and increases IL1B release. Interacts with EIF2AK2/PKR; this interaction requires EIF2AK2 activity, is accompanied by EIF2AK2 autophosphorylation and promotes inflammasome assembly in response to danger-associated signals. Interacts with MEFV; this interaction targets Nlrp1a to degradation by autophagy, hence preventing excessive IL1B- and IL18-mediated inflammation. Interacts with DPP9; leading to inhibit activation of the inflammasome. DPP9 acts via formation of a ternary complex, composed of a DPP9 homodimer, one full-length NLRP1 protein, and one cleaved C-terminus of Nlrp1a (NACHT, LRR and PYD domains-containing protein 1a, C-terminus). Interacts with DPP8; leading to inhibit activation of the inflammasome, probably via formation of a ternary complex with DPP8. In terms of assembly, interacts with the C-terminal part of Nlrp1a (NACHT, LRR and PYD domains-containing protein 1a, C-terminus) in absence of pathogens and other damage-associated signals. As to quaternary structure, interacts with the N-terminal part of Nlrp1a (NACHT, LRR and PYD domains-containing protein 1a, N-terminus) in absence of pathogens and other damage-associated signals. Homomultimer; forms the Nlrp1a inflammasome polymeric complex, a filament composed of homopolymers of this form in response to pathogens and other damage-associated signals. The Nlrp1a inflammasome polymeric complex directly recruits pro-caspase-1 (proCASP1) independently of PYCARD/ASC. Interacts (via CARD domain) with CASP1 (via CARD domain); leading to CASP1 activation. Post-translationally, autocatalytically cleaved. Autocatalytic cleavage in FIIND region occurs constitutively, prior to activation signals, and is required for inflammasome activity (IL1B release), possibly by facilitating CASP1 binding. Both N- and C-terminal parts remain associated non-covalently. In terms of processing, (Microbial infection) Cleavage by B.anthracis lethal toxin (LT) endopeptidase promotes ubiquitination and degradation of the N-terminal part, releasing the cleaved C-terminal part of the protein (NACHT, LRR and PYD domains-containing protein 1a, C-terminus), which polymerizes and forms the Nlrp1a inflammasome. Ubiquitinated in response to pathogen-associated signals, leading to its degradation by the proteasome and subsequent release of the cleaved C-terminal part of the protein (NACHT, LRR and PYD domains-containing protein 1a, C-terminus), which polymerizes and forms the Nlrp1a inflammasome.

It is found in the cytoplasm. The protein localises to the cytosol. It localises to the nucleus. Its subcellular location is the inflammasome. Activated by cleavage by B.anthracis lethal toxin (LT) endopeptidase. Cleavage by LT promotes ubiquitination and degradation of the N-terminal part, releasing the cleaved C-terminal part of the protein (NACHT, LRR and PYD domains-containing protein 1a, C-terminus), which polymerizes and forms the Nlrp1a inflammasome. Nlrp1a inflammasome is inhibited by DPP8 and DPP9, which sequester the C-terminal fragment of Nlrp1a (NACHT, LRR and PYD domains-containing protein 1a, C-terminus) in a ternary complex, thereby preventing Nlrp1a oligomerization and activation. Nlrp1a inflammasome is weakly activated by Val-boroPro (Talabostat, PT-100), an inhibitor of dipeptidyl peptidases DPP8 and DPP9. Val-boroPro relieves inhibition of DPP8 and/or DPP9 by promoting disruption of the ternary complex, releasing its C-terminal part from autoinhibition. Weakly activated by Toxoplasma gondii. Functionally, acts as the sensor component of the Nlrp1a inflammasome, which mediates inflammasome activation in response to various pathogen-associated signals, leading to subsequent pyroptosis. Inflammasomes are supramolecular complexes that assemble in the cytosol in response to pathogens and other damage-associated signals and play critical roles in innate immunity and inflammation. Acts as a recognition receptor (PRR): recognizes specific pathogens and other damage-associated signals, such as B.anthracis lethal toxin (LT) or Val-boroPro inhibitor, and mediates the formation of the inflammasome polymeric complex. In response to pathogen-associated signals, the N-terminal part of Nlrp1a is degraded by the proteasome, releasing the cleaved C-terminal part of the protein (NACHT, LRR and PYD domains-containing protein 1a, C-terminus), which polymerizes to initiate the formation of the inflammasome complex: the inflammasome directly recruits pro-caspase-1 (proCASP1) independently of PYCARD/ASC and promotes caspase-1 (CASP1) activation, which subsequently cleaves and activates inflammatory cytokines IL1B and IL18 and gasdermin-D (GSDMD), leading to pyroptosis. In the absence of GSDMD expression, the Nlrp1a inflammasome is able to recruit and activate CASP8, leading to activation of gasdermin-E (GSDME). Constitutes the precursor of the Nlrp1a inflammasome, which mediates autoproteolytic processing within the FIIND domain to generate the N-terminal and C-terminal parts, which are associated non-covalently in absence of pathogens and other damage-associated signals. In terms of biological role, regulatory part that prevents formation of the Nlrp1a inflammasome: in absence of pathogens and other damage-associated signals, interacts with the C-terminal part of Nlrp1a (NACHT, LRR and PYD domains-containing protein 1a, C-terminus), preventing activation of the Nlrp1a inflammasome. In response to pathogen-associated signals, this part is ubiquitinated by the N-end rule pathway and degraded by the proteasome, releasing the cleaved C-terminal part of the protein, which polymerizes and forms the Nlrp1a inflammasome. Its function is as follows. Constitutes the active part of the Nlrp1a inflammasome. In absence of pathogens and other damage-associated signals, interacts with the N-terminal part of Nlrp1a (NACHT, LRR and PYD domains-containing protein 1a, N-terminus), preventing activation of the Nlrp1a inflammasome. In response to pathogen-associated signals, the N-terminal part of Nlrp1a is degraded by the proteasome, releasing this form, which polymerizes to form the Nlrp1a inflammasome complex: the Nlrp1a inflammasome complex then directly recruits pro-caspase-1 (proCASP1) and promotes caspase-1 (CASP1) activation, leading to gasdermin-D (GSDMD) cleavage and subsequent pyroptosis. The protein is NACHT, LRR and PYD domains-containing protein 1a allele 1 of Rattus norvegicus (Rat).